The primary structure comprises 300 residues: Protoheme IX farnesyltransferase (300 aa).

The next 9 helical transmembrane spans lie at Val31–His51, Pro52–Ile72, Ile92–Phe112, Phe123–Lys145, Ile152–Gly172, Val179–Phe199, Ile225–Ser245, Ile247–Leu267, and Phe280–Val300.

Belongs to the UbiA prenyltransferase family. Protoheme IX farnesyltransferase subfamily.

It is found in the cell inner membrane. It catalyses the reaction heme b + (2E,6E)-farnesyl diphosphate + H2O = Fe(II)-heme o + diphosphate. The protein operates within porphyrin-containing compound metabolism; heme O biosynthesis; heme O from protoheme: step 1/1. Converts heme B (protoheme IX) to heme O by substitution of the vinyl group on carbon 2 of heme B porphyrin ring with a hydroxyethyl farnesyl side group. This chain is Protoheme IX farnesyltransferase, found in Rickettsia bellii (strain OSU 85-389).